A 692-amino-acid chain; its full sequence is Potassium-transporting ATPase ATP-binding subunit (692 aa).

Helical transmembrane passes span 50–70, 77–97, 240–260, and 266–286; these read PIMFVVEIGFIITFILSFLPS, GWFNITVSLILLFTVLFANFA, LTLIFLIVVVTLPIFTNYLGF, and VLVALLVCLIPTTIGGLLSAI. Residue D319 is the 4-aspartylphosphate intermediate of the active site. Residues D356, E360, 388–395, and K407 contribute to the ATP site; that span reads FKAETRMS. Mg(2+)-binding residues include D530 and D534. The next 3 membrane-spanning stretches (helical) occupy residues 600-620, 628-648, and 672-692; these read FAIIPAMFTLAIPQMEALNIM, AILSALIFNAVIIPLLIPLAM, and GGVIVPFIGIKVIDIIVGLFI.

It belongs to the cation transport ATPase (P-type) (TC 3.A.3) family. Type IA subfamily. As to quaternary structure, the system is composed of three essential subunits: KdpA, KdpB and KdpC.

The protein localises to the cell membrane. The catalysed reaction is K(+)(out) + ATP + H2O = K(+)(in) + ADP + phosphate + H(+). Part of the high-affinity ATP-driven potassium transport (or Kdp) system, which catalyzes the hydrolysis of ATP coupled with the electrogenic transport of potassium into the cytoplasm. This subunit is responsible for energy coupling to the transport system and for the release of the potassium ions to the cytoplasm. This is Potassium-transporting ATPase ATP-binding subunit from Bacillus cereus (strain 03BB102).